A 289-amino-acid polypeptide reads, in one-letter code: Acetyl-coenzyme A carboxylase carboxyl transferase subunit beta (289 aa).

Residues 27-289 form the CoA carboxyltransferase N-terminal domain; it reads LWSKCPSCES…SFMRVPAGAA (263 aa). Zn(2+) contacts are provided by cysteine 31, cysteine 34, cysteine 50, and cysteine 53. Residues 31-53 form a C4-type zinc finger; sequence CPSCESVLYRTDLESNSEVCPKC.

It belongs to the AccD/PCCB family. As to quaternary structure, acetyl-CoA carboxylase is a heterohexamer composed of biotin carboxyl carrier protein (AccB), biotin carboxylase (AccC) and two subunits each of ACCase subunit alpha (AccA) and ACCase subunit beta (AccD). Zn(2+) serves as cofactor.

It is found in the cytoplasm. The enzyme catalyses N(6)-carboxybiotinyl-L-lysyl-[protein] + acetyl-CoA = N(6)-biotinyl-L-lysyl-[protein] + malonyl-CoA. It participates in lipid metabolism; malonyl-CoA biosynthesis; malonyl-CoA from acetyl-CoA: step 1/1. Functionally, component of the acetyl coenzyme A carboxylase (ACC) complex. Biotin carboxylase (BC) catalyzes the carboxylation of biotin on its carrier protein (BCCP) and then the CO(2) group is transferred by the transcarboxylase to acetyl-CoA to form malonyl-CoA. This is Acetyl-coenzyme A carboxylase carboxyl transferase subunit beta from Methylobacillus flagellatus (strain ATCC 51484 / DSM 6875 / VKM B-1610 / KT).